Reading from the N-terminus, the 176-residue chain is Ribosome rescue factor SmrB (176 aa).

Positions 93–168 (LDLHGYRQSE…GDAALLVLID (76 aa)) constitute a Smr domain.

The protein belongs to the SmrB family. In terms of assembly, associates with collided ribosomes, but not with correctly translating polysomes.

Acts as a ribosome collision sensor. Detects stalled/collided disomes (pairs of ribosomes where the leading ribosome is stalled and a second ribosome has collided with it) and endonucleolytically cleaves mRNA at the 5' boundary of the stalled ribosome. Stalled/collided disomes form a new interface (primarily via the 30S subunits) that binds SmrB. Cleaved mRNA becomes available for tmRNA ligation, leading to ribosomal subunit dissociation and rescue of stalled ribosomes. The chain is Ribosome rescue factor SmrB from Shewanella baltica (strain OS223).